The chain runs to 153 residues: Pheromone-binding protein Gp-9 (153 aa).

An N-terminal signal peptide occupies residues 1-19 (MKTFVLHIFIFALVAFASA). Cystine bridges form between Cys37–Cys77, Cys73–Cys129, and Cys118–Cys138.

The protein belongs to the PBP/GOBP family. In terms of assembly, homodimer.

Its subcellular location is the secreted. Its function is as follows. Colony queen number, a major feature of social organization, is associated with worker genotype for Gp-9. Colonies are headed by either a single reproductive queen (monogyne form) or multiple queens (polygyne form). Differences in worker Gp-9 genotypes between social forms may cause differences in workers' abilities to recognize queens and regulate their numbers. This is Pheromone-binding protein Gp-9 from Solenopsis invicta (Red imported fire ant).